A 238-amino-acid polypeptide reads, in one-letter code: Uridylate kinase (238 aa).

12–15 (KLSG) is an ATP binding site. Residue Gly-54 participates in UMP binding. Gly-55 and Arg-59 together coordinate ATP. Residues Asp-74 and 135–142 (VGAPYFTT) contribute to the UMP site. ATP-binding residues include Thr-162, Tyr-168, and Asp-171.

Belongs to the UMP kinase family. As to quaternary structure, homohexamer.

The protein localises to the cytoplasm. The catalysed reaction is UMP + ATP = UDP + ADP. The protein operates within pyrimidine metabolism; CTP biosynthesis via de novo pathway; UDP from UMP (UMPK route): step 1/1. With respect to regulation, inhibited by UTP. Its function is as follows. Catalyzes the reversible phosphorylation of UMP to UDP. This is Uridylate kinase from Erythrobacter litoralis (strain HTCC2594).